Consider the following 490-residue polypeptide: MNLAEICDNAKKGREYALLGNYDSSMVYYQGVIQQIQRHCQSVRDPAVKGKWQQVRQELLEEYEQVKSIVSTLESFKIDKPPDFPVSCQDEPVRDPAVWPPPVPAEHRAPPQIRRSNREVRPLRKDMAGVGARGPVGRAHPISKSEKPSTSRDKDNRARGKDDKGRKNMQDGASDGEIPKFDGAGYDKDLIEALERDIVSRNPSIHWDDIADLEEAKKLLREAVVLPMWMPDFFKGIRRPWKGVLMVGPPGTGKTMLAKAVATECGTTFFNVSSSTLTSKYRGESEKLVRLLFEMARFYAPTTIFIDEIDSICSRRGTSDEHEASRRVKSELLIQMDGVGGALENDDPSKMVMVLAATNFPWDIDEALRRRLEKRIYIPLPTAKGRAELLKINLREVELDPDIQLEDIAEKIEGYSGADITNVCRDASLMAMRRRINGLSPEEIRALSKEELQMPVTKGDFELALKKIAKSVSAADLEKYEKWMVEFGSA.

Position 1 is an N-acetylmethionine (Met-1). Residues 87-182 (SCQDEPVRDP…ASDGEIPKFD (96 aa)) form a disordered region. The span at 116–127 (SNREVRPLRKDM) shows a compositional bias: basic and acidic residues. Positions 128–139 (AGVGARGPVGRA) are enriched in low complexity. Basic and acidic residues predominate over residues 143-169 (SKSEKPSTSRDKDNRARGKDDKGRKNM). A Phosphoserine modification is found at Ser-174. 248-255 (GPPGTGKT) contributes to the ATP binding site.

Belongs to the AAA ATPase family. Katanin p60 subunit A1 subfamily. A-like 1 sub-subfamily. In terms of assembly, interacts with KATNB1 and KATNBL1.

It localises to the cytoplasm. Its subcellular location is the cytoskeleton. The protein resides in the spindle pole. The protein localises to the spindle. It catalyses the reaction n ATP + n H2O + a microtubule = n ADP + n phosphate + (n+1) alpha/beta tubulin heterodimers.. Functionally, regulates microtubule dynamics in Sertoli cells, a process that is essential for spermiogenesis and male fertility. Severs microtubules in an ATP-dependent manner, promoting rapid reorganization of cellular microtubule arrays. Has microtubule-severing activity in vitro. In Otolemur garnettii (Small-eared galago), this protein is Katanin p60 ATPase-containing subunit A-like 1.